The sequence spans 199 residues: Ribosome maturation factor RimM (199 aa).

A PRC barrel domain is found at 100-195 (ADEWYPKDLI…YLTLDPPGGL (96 aa)).

Belongs to the RimM family. Binds ribosomal protein uS19.

Its subcellular location is the cytoplasm. An accessory protein needed during the final step in the assembly of 30S ribosomal subunit, possibly for assembly of the head region. Essential for efficient processing of 16S rRNA. May be needed both before and after RbfA during the maturation of 16S rRNA. It has affinity for free ribosomal 30S subunits but not for 70S ribosomes. This chain is Ribosome maturation factor RimM, found in Bifidobacterium longum (strain DJO10A).